We begin with the raw amino-acid sequence, 562 residues long: Glutamyl-tRNA(Gln) amidotransferase subunit B, chloroplastic/mitochondrial (562 aa).

Residues 48 to 76 (SVASNSKREPRPVKTRVMTQERGSGETQT) form a disordered region. A compositionally biased stretch (polar residues) spans 64–76 (VMTQERGSGETQT).

The protein belongs to the GatB/GatE family. GatB subfamily. As to quaternary structure, subunit of the heterotrimeric GatCAB amidotransferase (AdT) complex, composed of A, B and C subunits.

Its subcellular location is the mitochondrion. The protein resides in the plastid. It is found in the chloroplast. It catalyses the reaction L-glutamyl-tRNA(Gln) + L-glutamine + ATP + H2O = L-glutaminyl-tRNA(Gln) + L-glutamate + ADP + phosphate + H(+). Functionally, allows the formation of correctly charged Gln-tRNA(Gln) through the transamidation of misacylated Glu-tRNA(Gln) in chloroplasts and mitochondria. The reaction takes place in the presence of glutamine and ATP through an activated gamma-phospho-Glu-tRNA(Gln). The chain is Glutamyl-tRNA(Gln) amidotransferase subunit B, chloroplastic/mitochondrial from Physcomitrium patens (Spreading-leaved earth moss).